We begin with the raw amino-acid sequence, 150 residues long: D-aminoacyl-tRNA deacylase (150 aa).

Positions 138 to 139 match the Gly-cisPro motif, important for rejection of L-amino acids motif; it reads GP.

Belongs to the DTD family. Homodimer.

Its subcellular location is the cytoplasm. It catalyses the reaction glycyl-tRNA(Ala) + H2O = tRNA(Ala) + glycine + H(+). The catalysed reaction is a D-aminoacyl-tRNA + H2O = a tRNA + a D-alpha-amino acid + H(+). In terms of biological role, an aminoacyl-tRNA editing enzyme that deacylates mischarged D-aminoacyl-tRNAs. Also deacylates mischarged glycyl-tRNA(Ala), protecting cells against glycine mischarging by AlaRS. Acts via tRNA-based rather than protein-based catalysis; rejects L-amino acids rather than detecting D-amino acids in the active site. By recycling D-aminoacyl-tRNA to D-amino acids and free tRNA molecules, this enzyme counteracts the toxicity associated with the formation of D-aminoacyl-tRNA entities in vivo and helps enforce protein L-homochirality. In Chlorobium limicola (strain DSM 245 / NBRC 103803 / 6330), this protein is D-aminoacyl-tRNA deacylase.